Here is a 139-residue protein sequence, read N- to C-terminus: Holo-[acyl-carrier-protein] synthase (139 aa).

Residues Asp-8 and Glu-57 each coordinate Mg(2+).

Belongs to the P-Pant transferase superfamily. AcpS family. Mg(2+) is required as a cofactor.

Its subcellular location is the cytoplasm. The enzyme catalyses apo-[ACP] + CoA = holo-[ACP] + adenosine 3',5'-bisphosphate + H(+). Its function is as follows. Transfers the 4'-phosphopantetheine moiety from coenzyme A to a Ser of acyl-carrier-protein. This Sinorhizobium medicae (strain WSM419) (Ensifer medicae) protein is Holo-[acyl-carrier-protein] synthase.